Consider the following 391-residue polypeptide: Dual-specificity RNA methyltransferase RlmN (391 aa).

A disordered region spans residues 1–20 (MTSVVADSLTETKTDSQKPI). Positions 10 to 20 (TETKTDSQKPI) are enriched in basic and acidic residues. Catalysis depends on glutamate 120, which acts as the Proton acceptor. One can recognise a Radical SAM core domain in the interval 126-366 (DADRGTLCIS…APVRRTRGQD (241 aa)). Cysteine 133 and cysteine 371 form a disulfide bridge. [4Fe-4S] cluster contacts are provided by cysteine 140, cysteine 144, and cysteine 147. S-adenosyl-L-methionine-binding positions include 195–196 (GE), serine 227, 249–251 (SLH), and asparagine 328. The active-site S-methylcysteine intermediate is cysteine 371.

It belongs to the radical SAM superfamily. RlmN family. The cofactor is [4Fe-4S] cluster.

It localises to the cytoplasm. It carries out the reaction adenosine(2503) in 23S rRNA + 2 reduced [2Fe-2S]-[ferredoxin] + 2 S-adenosyl-L-methionine = 2-methyladenosine(2503) in 23S rRNA + 5'-deoxyadenosine + L-methionine + 2 oxidized [2Fe-2S]-[ferredoxin] + S-adenosyl-L-homocysteine. The catalysed reaction is adenosine(37) in tRNA + 2 reduced [2Fe-2S]-[ferredoxin] + 2 S-adenosyl-L-methionine = 2-methyladenosine(37) in tRNA + 5'-deoxyadenosine + L-methionine + 2 oxidized [2Fe-2S]-[ferredoxin] + S-adenosyl-L-homocysteine. Specifically methylates position 2 of adenine 2503 in 23S rRNA and position 2 of adenine 37 in tRNAs. m2A2503 modification seems to play a crucial role in the proofreading step occurring at the peptidyl transferase center and thus would serve to optimize ribosomal fidelity. This Zymomonas mobilis subsp. mobilis (strain ATCC 31821 / ZM4 / CP4) protein is Dual-specificity RNA methyltransferase RlmN.